Reading from the N-terminus, the 395-residue chain is Elongation factor Tu (395 aa).

The 195-residue stretch at 10 to 204 (KPHVNIGTIG…NVDEYIPLPQ (195 aa)) folds into the tr-type G domain. The segment at 19 to 26 (GHVDHGKT) is G1. 19 to 26 (GHVDHGKT) is a GTP binding site. T26 lines the Mg(2+) pocket. The tract at residues 60–64 (GITIN) is G2. A G3 region spans residues 81–84 (DCPG). GTP-binding positions include 81 to 85 (DCPGH) and 136 to 139 (NKVD). The G4 stretch occupies residues 136–139 (NKVD). The tract at residues 174-176 (SAL) is G5.

This sequence belongs to the TRAFAC class translation factor GTPase superfamily. Classic translation factor GTPase family. EF-Tu/EF-1A subfamily. Monomer.

The protein localises to the cytoplasm. The catalysed reaction is GTP + H2O = GDP + phosphate + H(+). In terms of biological role, GTP hydrolase that promotes the GTP-dependent binding of aminoacyl-tRNA to the A-site of ribosomes during protein biosynthesis. The protein is Elongation factor Tu of Amoebophilus asiaticus (strain 5a2).